Consider the following 418-residue polypeptide: Chromo domain-containing protein rhino (418 aa).

The region spanning 24–74 (YVVEKILGKRFVNGRPQVLVKWSGFPNENNTWEPLENVGNCMKLVSDFESE) is the Chromo domain. Composition is skewed to low complexity over residues 84-99 (AKSVGKSKSSPSSSGP) and 107-120 (SSSKKTQQHSKSVQ). Disordered regions lie at residues 84-167 (AKSV…TDST) and 199-337 (PTKD…RCPR). Residues 131–143 (NQKKGKNIKKTAG) are compositionally biased toward basic residues. A compositionally biased stretch (polar residues) spans 152-167 (PKTQMPSTSQVSTDST). The span at 218 to 228 (RLIEFPQREDA) shows a compositional bias: basic and acidic residues. Residues 258–275 (GESSSSMSLPTVSSTSSE) show a composition bias toward low complexity. A compositionally biased stretch (basic and acidic residues) spans 276-285 (KSIKVTKSEP). The segment at 353-418 (TKPFGVNRGL…FESLRIIVPK (66 aa)) is required for interaction with del/deadlock.

In terms of assembly, homodimer in solution. Dimerization is essential for chromatin binding. Component of the Rhino-Deadlock-Cutoff (RDC) complex, composed of rhi/rhino, del/deadlock and cuff/cutoff. Interacts (via C-terminus) with del/deadlock (via N-terminus); this interaction is direct. Two copies of del/deadlock associate with each rhi/rhino dimer. Interacts with cuff/cutoff; this interaction is indirect and is mediated by del/deadlock. Interacts (via Chromo domain) with kipf/kipferl (via C2H2 type zinc finger 4). Interacts (via Chromo domain) with His3/histone H3 (via N-terminus di- or tri-methylated on 'Lys-10' (H3K9me2/3)); this interaction is direct. Two His3 N-terminal tails oriented anti-parallel to each other are required for dimer binding to His3. Female specific, expressed in both somatic and germline cells but highly enriched in ovaries. In the germarium of the developing oocyte expressed in germline stem cells, cystoblasts and developing germline cysts. Expressed in nurse cells in the germarium and egg chamber.

It localises to the nucleus. The protein resides in the chromosome. In terms of biological role, involved in piRNA (piwi-interacting RNA)-mediated transposon repression. May be involved in formation of the perinuclear nuage, a subcellular structure implicated in RNA processing that may be involved in transposon RNA surveillance and silencing. Required for ping-pong amplification during piRNA biogenesis, probably by promoting transcription of piRNA precursors. As part of the Rhino-Deadlock-Cutoff (RDC) Complex associates with, and drives non-canonical transcription of germline specific dual-strand piRNA clusters 80F, 38C and 42AB, but not single-stranded piRNA cluster 20A. Induction of piRNA expression is potentially achieved through a mechanism that prevents transcriptional termination and leads to readthrough from flanking transcription units. Recruited to specific chromatin regions by a combination of H3K9me2/3 histone methylation and differentially expressed sequence-specific recruitment factors. This association may involve direct interaction with DNA. Associates with chromatin upon exposure to homologous piRNA and facilitates transcriptional read-through. As part of the RDC complex, involved in suppression of splicing. In ovaries, recruitment to specific heterochromatin clusters is nucleated and stabilized by kipf/kipferl. During oogenesis, involved in axis specification and may regulate chromosome condensation at the onset of a mitotic-like phase that occurs during nurse cell chromosome duplication. Involved in the distribution of mRNAs for proteins that play a role in anterior-posterior and dorsal-ventral axes specification during development of the oocyte, including grk/gurken, osk/oskar and vas/vasa. Mitigates meiotic double strand breaks and interacts with DNA damage signaling to mediate axis specification. The polypeptide is Chromo domain-containing protein rhino (Drosophila melanogaster (Fruit fly)).